A 286-amino-acid chain; its full sequence is 33 kDa chaperonin (286 aa).

2 cysteine pairs are disulfide-bonded: C225–C227 and C258–C261.

The protein belongs to the HSP33 family. In terms of processing, under oxidizing conditions two disulfide bonds are formed involving the reactive cysteines. Under reducing conditions zinc is bound to the reactive cysteines and the protein is inactive.

The protein localises to the cytoplasm. Functionally, redox regulated molecular chaperone. Protects both thermally unfolding and oxidatively damaged proteins from irreversible aggregation. Plays an important role in the bacterial defense system toward oxidative stress. The polypeptide is 33 kDa chaperonin (Shewanella sp. (strain ANA-3)).